We begin with the raw amino-acid sequence, 145 residues long: Deoxyuridine 5'-triphosphate nucleotidohydrolase (145 aa).

Substrate-binding positions include R65 to G67, N78, T82 to D84, and M92.

Belongs to the dUTPase family. The cofactor is Mg(2+).

The catalysed reaction is dUTP + H2O = dUMP + diphosphate + H(+). The protein operates within pyrimidine metabolism; dUMP biosynthesis; dUMP from dCTP (dUTP route): step 2/2. In terms of biological role, this enzyme is involved in nucleotide metabolism: it produces dUMP, the immediate precursor of thymidine nucleotides and it decreases the intracellular concentration of dUTP so that uracil cannot be incorporated into DNA. In Chlorobium phaeobacteroides (strain BS1), this protein is Deoxyuridine 5'-triphosphate nucleotidohydrolase.